The following is a 677-amino-acid chain: Envelope glycoprotein (677 aa).

The signal sequence occupies residues 1–33 (MGSGYQLLQLPRERFRKTSFLVWVIILFQRAIS). At 34–651 (MPLGIVTNST…DLNLWTGWRQ (618 aa)) the chain is on the extracellular side. N-linked (GlcNAc...) asparagine; by host glycosylation occurs at Asn-41. 5 disulfides stabilise this stretch: Cys-54–Cys-610, Cys-109–Cys-136, Cys-122–Cys-148, Cys-512–Cys-557, and Cys-602–Cys-609. The segment at 55 to 202 (RDKLSSTSQL…HFWKATPAHE (148 aa)) is receptor-binding. 12 N-linked (GlcNAc...) asparagine; by host glycosylation sites follow: Asn-205, Asn-239, Asn-258, Asn-269, Asn-297, Asn-317, Asn-318, Asn-339, Asn-406, Asn-420, Asn-435, and Asn-463. Residues 306–486 (NLHFQILSTH…PSQPGLTINT (181 aa)) are mucin-like region. Positions 315-326 (HTNNSSDQSPAG) are enriched in polar residues. Disordered regions lie at residues 315–349 (HTNN…TDSP), 370–483 (NGET…PGLT), and 489–508 (KVAD…RQNT). Polar residues-rich tracts occupy residues 370 to 421 (NGET…ASNE), 428 to 445 (MNSI…QTKA), and 458 to 472 (PQET…TSPG). Residues 525–540 (GAAAGLAWIPYFGPAA) are fusion peptide. Residues 555–596 (LICGLRQLANETTQALQLFLRATTELRTYSLLNRKAIDFLLQ) are a coiled coil. A glycan (N-linked (GlcNAc...) asparagine; by host) is linked at Asn-564. The stretch at 616-635 (WTKNITDEINQIKHDFIDNP) forms a coiled coil. A glycan (N-linked (GlcNAc...) asparagine; by host) is linked at Asn-619. Residues 652–672 (WIPAGIGIIGVIIAIIALLCI) traverse the membrane as a helical segment. Residues Cys-671 and Cys-673 are each lipidated (S-palmitoyl cysteine; by host). At 673-677 (CKILC) the chain is on the cytoplasmic side.

The protein belongs to the filoviruses glycoprotein family. As to quaternary structure, homotrimer; each monomer consists of a GP1 and a GP2 subunit linked by disulfide bonds. The resulting peplomers (GP1,2) protrude from the virus surface as spikes. Interacts with host integrin alpha-V/ITGAV. Interacts with host CLEC10A. Binds also to host CD209 and CLEC4M/DC-SIGN(R). Interacts with host FOLR1. Interacts with BST2; this interaction inhibits the antiviral effect of BST2 and this allows viral release from infected cells. Interacts with host FCN1; this interaction enhances viral entry. Interacts with host TLR4; this interaction induces cell death in T-lymphocytes or proinflammatory cytokines and SOCS1 production in monocytes. In terms of assembly, interacts with host entry receptor NPC1. GP1 and GP2delta are part of GP1,2delta soluble complexes released by ectodomain shedding. Post-translationally, the signal peptide region modulates GP's high mannose glycosylation, thereby determining the efficiency of the interactions with DC-SIGN(R). In terms of processing, N-glycosylated. O-glycosylated in the mucin-like region. Post-translationally, palmitoylation of GP2 is not required for its function. In terms of processing, specific enzymatic cleavages in vivo yield mature proteins. The precursor is processed into GP1 and GP2 by host cell furin in the trans Golgi, and maybe by other host proteases, to yield the mature GP1 and GP2 proteins. The cleavage site corresponds to the furin optimal cleavage sequence [KR]-X-[KR]-R. This cleavage does not seem to be required for function. After the internalization of the virus into cell endosomes, GP1 C-terminus is removed by the endosomal proteases cathepsin B, cathepsin L, or both, leaving a 19-kDa N-terminal fragment which is further digested by cathepsin B. Proteolytic processing of GP1,2 by host ADAM17 can remove the transmembrane anchor of GP2 and leads to shedding of complexes consisting in GP1 and truncated GP2 (GP1,2delta).

It is found in the virion membrane. The protein localises to the host cell membrane. The protein resides in the secreted. Functionally, trimeric GP1,2 complexes form the virion surface spikes and mediate the viral entry processes, with GP1 acting as the receptor-binding subunit and GP2 as the membrane fusion subunit. At later times of infection, down-regulates the expression of various host cell surface molecules that are essential for immune surveillance and cell adhesion. Down-modulates several integrins including ITGA1, ITGA2, ITGA3, ITGA4, ITGA5, ITGA6, ITGAV and ITGB1. This decrease in cell adhesion molecules may lead to cell detachment, contributing to the disruption of blood vessel integrity and hemorrhages developed during infection (cytotoxicity). Interacts with host TLR4 and thereby stimulates the differentiation and activation of monocytes leading to bystander death of T-lymphocytes. Down-regulates as well the function of host natural killer cells. Counteracts the antiviral effect of host BST2/tetherin that restricts release of progeny virions from infected cells. However, cooperates with VP40 and host BST2 to activate canonical NF-kappa-B pathway in a manner dependent on neddylation. In terms of biological role, functions as a decoy for anti-GP1,2 antibodies thereby contributing to viral immune evasion. Interacts and activates host macrophages and dendritic cells inducing up-regulation of cytokine transcription. This effect is mediated throught activation of host TLR4. Responsible for binding to the receptor(s) on target cells. Interacts with CD209/DC-SIGN and CLEC4M/DC-SIGNR which act as cofactors for virus entry into dendritic cells (DCs) and endothelial cells. Binding to the macrophage specific lectin CLEC10A also seems to enhance virus infectivity. Interaction with FOLR1/folate receptor alpha may be a cofactor for virus entry in some cell types, although results are contradictory. Members of the Tyro3 receptor tyrosine kinase family also seem to be cell entry factors in filovirus infection. Once attached, the virions are internalized through clathrin-dependent endocytosis and/or macropinocytosis. After internalization of the virus into the endosomes of the host cell, proteolysis of GP1 by two cysteine proteases, CTSB/cathepsin B and CTSL/cathepsin L removes the glycan cap and allows GP1 binding to the host entry receptor NPC1. NPC1-binding, Ca(2+) and acidic pH induce a conformational change of GP2, which unmasks its fusion peptide and permit membranes fusion. Its function is as follows. Acts as a class I viral fusion protein. Under the current model, the protein has at least 3 conformational states: pre-fusion native state, pre-hairpin intermediate state, and post-fusion hairpin state. During viral and target cell membrane fusion, the coiled coil regions (heptad repeats) assume a trimer-of-hairpins structure, positioning the fusion peptide in close proximity to the C-terminal region of the ectodomain. The formation of this structure appears to drive apposition and subsequent fusion of viral and target cell membranes. Responsible for penetration of the virus into the cell cytoplasm by mediating the fusion of the membrane of the endocytosed virus particle with the endosomal membrane. Low pH in endosomes induces an irreversible conformational change in GP2, releasing the fusion hydrophobic peptide. This is Envelope glycoprotein (GP) from Reston ebolavirus (strain Philippines-96) (REBOV).